The following is an 85-amino-acid chain: Small ribosomal subunit protein uS17 (85 aa).

It belongs to the universal ribosomal protein uS17 family. As to quaternary structure, part of the 30S ribosomal subunit.

Its function is as follows. One of the primary rRNA binding proteins, it binds specifically to the 5'-end of 16S ribosomal RNA. This Pasteurella multocida (strain Pm70) protein is Small ribosomal subunit protein uS17.